Here is a 389-residue protein sequence, read N- to C-terminus: Probable serine/threonine-protein kinase PBL11 (389 aa).

The N-myristoyl glycine moiety is linked to residue Gly-2. The S-palmitoyl cysteine moiety is linked to residue Cys-4. Residues 68–353 (FRPDSVVGEG…NEIVKTMEEL (286 aa)) form the Protein kinase domain. ATP is bound by residues 74–82 (VGEGGFGCV) and Lys-106. At Tyr-151 the chain carries Phosphotyrosine. Residue Asp-203 is the Proton acceptor of the active site. Phosphoserine is present on residues Ser-207 and Ser-237. Residues Thr-238 and Thr-243 each carry the phosphothreonine modification. Phosphotyrosine is present on Tyr-251.

It belongs to the protein kinase superfamily. Ser/Thr protein kinase family. In terms of tissue distribution, roots, leaves and stems.

The protein resides in the cell membrane. The enzyme catalyses L-seryl-[protein] + ATP = O-phospho-L-seryl-[protein] + ADP + H(+). It carries out the reaction L-threonyl-[protein] + ATP = O-phospho-L-threonyl-[protein] + ADP + H(+). Its function is as follows. May play a role in the regulation of plant growth and development. May be involved in plant defense signaling. The protein is Probable serine/threonine-protein kinase PBL11 of Arabidopsis thaliana (Mouse-ear cress).